The chain runs to 208 residues: Thymidylate kinase (208 aa).

Residue 10 to 17 coordinates ATP; that stretch reads GPEGSGKT.

Belongs to the thymidylate kinase family.

It carries out the reaction dTMP + ATP = dTDP + ADP. Functionally, phosphorylation of dTMP to form dTDP in both de novo and salvage pathways of dTTP synthesis. This is Thymidylate kinase from Bacillus cereus (strain ATCC 14579 / DSM 31 / CCUG 7414 / JCM 2152 / NBRC 15305 / NCIMB 9373 / NCTC 2599 / NRRL B-3711).